Reading from the N-terminus, the 1347-residue chain is G-protein coupled receptor-associated sorting protein 1 (1347 aa).

Disordered regions lie at residues 1–75 (MTRA…AYAK), 145–174 (ESIP…SWYR), and 188–281 (DFKW…NSRS). The segment covering 21–33 (ENANAAEVEPEAP) has biased composition (low complexity). Positions 211–226 (FRPRKSMKANNRFRHM) are enriched in basic residues. Residues 263–278 (PKDKTKVWSKPKEEPN) are compositionally biased toward basic and acidic residues. At Ser-295 the chain carries Phosphoserine. Disordered stretches follow at residues 310-344 (GEEA…AMSG), 364-396 (FSKS…QEAR), and 460-485 (QVSS…SKSM). Positions 316–325 (RSKPRARKGV) are enriched in basic residues. The segment covering 370–396 (KKEPRTRAVPKEEVKTKARASTKQEAR) has biased composition (basic and acidic residues). The span at 461-484 (VSSFCLGSGKKSSMESGPKATSKS) shows a compositional bias: polar residues. 2 positions are modified to phosphoserine: Ser-619 and Ser-626. The residue at position 860 (Thr-860) is a Phosphothreonine. Residue Ser-862 is modified to Phosphoserine.

It belongs to the GPRASP family. In terms of assembly, interacts with cytoplasmic tails of a variety of G-protein coupled receptors such as delta opioid receptor/OPRD1, beta-2 adrenergic receptor/ADRB2 and D4 dopamine receptor/DRD4 as well as D2 dopamine receptor/DRD2. Interacts with PER1. Interacts with BECN2; the interaction is direct. Expressed in the brain, with higher expression in the hippocampus, hypothalamus and olfactory bulb.

The protein localises to the cytoplasm. In terms of biological role, modulates lysosomal sorting and functional down-regulation of a variety of G-protein coupled receptors. Targets receptors for degradation in lysosomes via its interaction with BECN2. The polypeptide is G-protein coupled receptor-associated sorting protein 1 (Gprasp1) (Mus musculus (Mouse)).